Consider the following 449-residue polypeptide: Xaa-Pro dipeptidase (449 aa).

5 residues coordinate Mn(2+): aspartate 246, aspartate 257, histidine 345, glutamate 390, and glutamate 429.

It belongs to the peptidase M24B family. Bacterial-type prolidase subfamily. The cofactor is Mn(2+).

It carries out the reaction Xaa-L-Pro dipeptide + H2O = an L-alpha-amino acid + L-proline. Its function is as follows. Splits dipeptides with a prolyl residue in the C-terminal position. The polypeptide is Xaa-Pro dipeptidase (Yersinia enterocolitica serotype O:8 / biotype 1B (strain NCTC 13174 / 8081)).